We begin with the raw amino-acid sequence, 224 residues long: Synaptonemal complex protein 3 (224 aa).

Coiled-coil stretches lie at residues 63–97 (RVKC…WEER) and 137–171 (HDSM…QSST).

Interacts with gras-1. Interacts with brc-1 and brd-1.

It localises to the chromosome. Plays a role in early meiotic events; during prophase I contributes to synaptonemal complex (SC) assembly, synapsis and chiasmata formation and stabilization of homologous chromosomes pairing. Required for restricting SC assembly to bridge paired chromosome axes. Required for the timely progression of meiotic crossover recombination. Required for the synapsis checkpoint. This Caenorhabditis elegans protein is Synaptonemal complex protein 3.